Consider the following 361-residue polypeptide: UDP-N-acetylglucosamine--N-acetylmuramyl-(pentapeptide) pyrophosphoryl-undecaprenol N-acetylglucosamine transferase (361 aa).

Residues 12-14 (TGG), asparagine 126, arginine 167, serine 192, isoleucine 247, and glutamine 292 each bind UDP-N-acetyl-alpha-D-glucosamine.

It belongs to the glycosyltransferase 28 family. MurG subfamily.

It localises to the cell inner membrane. It catalyses the reaction di-trans,octa-cis-undecaprenyl diphospho-N-acetyl-alpha-D-muramoyl-L-alanyl-D-glutamyl-meso-2,6-diaminopimeloyl-D-alanyl-D-alanine + UDP-N-acetyl-alpha-D-glucosamine = di-trans,octa-cis-undecaprenyl diphospho-[N-acetyl-alpha-D-glucosaminyl-(1-&gt;4)]-N-acetyl-alpha-D-muramoyl-L-alanyl-D-glutamyl-meso-2,6-diaminopimeloyl-D-alanyl-D-alanine + UDP + H(+). It functions in the pathway cell wall biogenesis; peptidoglycan biosynthesis. Cell wall formation. Catalyzes the transfer of a GlcNAc subunit on undecaprenyl-pyrophosphoryl-MurNAc-pentapeptide (lipid intermediate I) to form undecaprenyl-pyrophosphoryl-MurNAc-(pentapeptide)GlcNAc (lipid intermediate II). The protein is UDP-N-acetylglucosamine--N-acetylmuramyl-(pentapeptide) pyrophosphoryl-undecaprenol N-acetylglucosamine transferase of Syntrophus aciditrophicus (strain SB).